We begin with the raw amino-acid sequence, 355 residues long: Probable butyrate kinase (355 aa).

This sequence belongs to the acetokinase family.

It localises to the cytoplasm. The catalysed reaction is butanoate + ATP = butanoyl phosphate + ADP. The sequence is that of Probable butyrate kinase from Listeria monocytogenes serotype 4a (strain HCC23).